The sequence spans 275 residues: Cell division protein FtsQ (275 aa).

The disordered stretch occupies residues 1–20; the sequence is MRDLHKKKPRPVTQNRLKKP. Topologically, residues 1 to 38 are cytoplasmic; the sequence is MRDLHKKKPRPVTQNRLKKPPKTCKPINYRGILKKTAK. A helical membrane pass occupies residues 39–61; sequence VVGGAALISAVGCAGYGIYRIIA. Over 62–275 the chain is Periplasmic; the sequence is GTTFFKLERI…YSDKIIVKKV (214 aa). The POTRA domain maps to 66–134; it reads FKLERIEVSE…NTLSMQIAER (69 aa).

Belongs to the FtsQ/DivIB family. FtsQ subfamily.

The protein resides in the cell inner membrane. In terms of biological role, essential cell division protein. The chain is Cell division protein FtsQ from Geotalea daltonii (strain DSM 22248 / JCM 15807 / FRC-32) (Geobacter daltonii).